A 453-amino-acid chain; its full sequence is DNA repair protein RadA (453 aa).

The segment at 10-27 adopts a C4-type zinc-finger fold; it reads CQECGYQSPKYLGRCPNC. An ATP-binding site is contributed by 95–102; that stretch reads GDPGIGKS. Positions 251-255 match the RadA KNRFG motif motif; the sequence is KNRFG. Residues 350-453 are lon-protease-like; it reads DAYLKSAGGV…VGQVLKAVFS (104 aa).

Belongs to the RecA family. RadA subfamily.

Its function is as follows. DNA-dependent ATPase involved in processing of recombination intermediates, plays a role in repairing DNA breaks. Stimulates the branch migration of RecA-mediated strand transfer reactions, allowing the 3' invading strand to extend heteroduplex DNA faster. Binds ssDNA in the presence of ADP but not other nucleotides, has ATPase activity that is stimulated by ssDNA and various branched DNA structures, but inhibited by SSB. Does not have RecA's homology-searching function. The chain is DNA repair protein RadA from Streptococcus pyogenes serotype M6 (strain ATCC BAA-946 / MGAS10394).